Here is a 400-residue protein sequence, read N- to C-terminus: Aspartate aminotransferase (400 aa).

The L-aspartate site is built by Gly37, Trp126, and Asn176. Lys238 is subject to N6-(pyridoxal phosphate)lysine. Residue Arg367 participates in L-aspartate binding.

It belongs to the class-I pyridoxal-phosphate-dependent aminotransferase family. In terms of assembly, homodimer. Requires pyridoxal 5'-phosphate as cofactor.

Its subcellular location is the cytoplasm. The catalysed reaction is L-aspartate + 2-oxoglutarate = oxaloacetate + L-glutamate. In terms of biological role, catalyzes the reversible conversion of aspartate and 2-oxoglutarate to glutamate and oxaloacetate. Has very weak prephenate aminotransferase activity. The sequence is that of Aspartate aminotransferase from Musicola paradisiaca (strain Ech703) (Dickeya paradisiaca).